A 577-amino-acid chain; its full sequence is Phosphoenolpyruvate-protein phosphotransferase (577 aa).

Histidine 191 acts as the Tele-phosphohistidine intermediate in catalysis. The phosphoenolpyruvate site is built by arginine 298 and arginine 334. Residues glutamate 435 and aspartate 459 each contribute to the Mg(2+) site. Phosphoenolpyruvate is bound by residues asparagine 458 to aspartate 459 and arginine 469. Residue cysteine 506 is the Proton donor of the active site.

It belongs to the PEP-utilizing enzyme family. Homodimer. Requires Mg(2+) as cofactor.

Its subcellular location is the cytoplasm. The enzyme catalyses L-histidyl-[protein] + phosphoenolpyruvate = N(pros)-phospho-L-histidyl-[protein] + pyruvate. Functionally, general (non sugar-specific) component of the phosphoenolpyruvate-dependent sugar phosphotransferase system (sugar PTS). This major carbohydrate active-transport system catalyzes the phosphorylation of incoming sugar substrates concomitantly with their translocation across the cell membrane. Enzyme I transfers the phosphoryl group from phosphoenolpyruvate (PEP) to the phosphoryl carrier protein (HPr). In Streptococcus equinus (Streptococcus bovis), this protein is Phosphoenolpyruvate-protein phosphotransferase (ptsI).